A 157-amino-acid polypeptide reads, in one-letter code: XylDLEGF operon transcriptional activator 2 (157 aa).

An HTH araC/xylS-type domain is found at 39–140 (ERVVQFIEEN…GELPSDTLSL (102 aa)). DNA-binding regions (H-T-H motif) lie at residues 56–77 (EQLA…EKHT) and 107–130 (ITEV…RSTF).

The protein localises to the cytoplasm. Regulatory protein of the TOL plasmid xyl operons. XylS activates the xylXYZLTEGFJQKIH operon required for the degradation of toluene, m-xylene and p-xylene. This chain is XylDLEGF operon transcriptional activator 2 (xylS2), found in Pseudomonas putida (Arthrobacter siderocapsulatus).